Here is a 334-residue protein sequence, read N- to C-terminus: D-fructose 1,6-bisphosphatase class 2/sedoheptulose 1,7-bisphosphatase (334 aa).

4 residues coordinate Mn(2+): aspartate 33, glutamate 57, aspartate 85, and glutamate 88. Residues 88-90 (EGT), tyrosine 119, 164-166 (RAR), and 186-188 (DGD) contribute to the substrate site. Glutamate 213 is a Mn(2+) binding site.

It belongs to the FBPase class 2 family. As to quaternary structure, homotetramer. The cofactor is Mn(2+).

The enzyme catalyses beta-D-fructose 1,6-bisphosphate + H2O = beta-D-fructose 6-phosphate + phosphate. The catalysed reaction is D-sedoheptulose 1,7-bisphosphate + H2O = D-sedoheptulose 7-phosphate + phosphate. Its pathway is carbohydrate biosynthesis; Calvin cycle. Functionally, catalyzes the hydrolysis of fructose 1,6-bisphosphate (Fru 1,6-P2) and sedoheptulose 1,7-bisphosphate (Sed 1,7-P2) to fructose 6-phosphate and sedoheptulose 7-phosphate, respectively. This is D-fructose 1,6-bisphosphatase class 2/sedoheptulose 1,7-bisphosphatase from Synechococcus sp. (strain CC9605).